The following is a 425-amino-acid chain: Histidine--tRNA ligase 1 (425 aa).

It belongs to the class-II aminoacyl-tRNA synthetase family. As to quaternary structure, homodimer.

The protein resides in the cytoplasm. The enzyme catalyses tRNA(His) + L-histidine + ATP = L-histidyl-tRNA(His) + AMP + diphosphate + H(+). The protein is Histidine--tRNA ligase 1 of Bacillus thuringiensis subsp. konkukian (strain 97-27).